Reading from the N-terminus, the 597-residue chain is Ran-binding protein 9 (597 aa).

The B30.2/SPRY domain occupies 29–216 (LNQRLRRLYP…VDANFGQHPF (188 aa)). The LisH domain maps to 247-279 (WQAMIQKMVASYLVHHSYCATAEAFAKSTDQAV). Residues 285-342 (SIKNRQKIQKLVLSGRMGEAIETTQQLYPSLLERNPDLLFMLKVRQFIEMVNGTDSEV) form the CTLH domain. Disordered regions lie at residues 343–375 (RCLGGRSPKSQDSYPGSPRLFNSPVHKPSSSQA), 389–417 (SSSKGHTSAHSHKSCPPTLSSPELGVLNG), and 437–475 (SNGVSESSSNGFLNGSSTHGTEQEDCDADMEVDSTQSKR). Positions 438–456 (NGVSESSSNGFLNGSSTHG) are enriched in polar residues. The span at 459–468 (QEDCDADMEV) shows a compositional bias: acidic residues.

It belongs to the RANBP9/10 family. Identified in the CTLH complex that contains at least MAEA, RMND5A (or alternatively its paralog RMND5B), GID8, WDR26, and RANBP9 and/or RANBP10.

It localises to the cytoplasm. The protein resides in the cell membrane. The protein localises to the nucleus. May act as scaffolding protein, and as adapter protein to couple membrane receptors to intracellular signaling pathways. Acts as a mediator of cell spreading and actin cytoskeleton rearrangement. Core component of the CTLH E3 ubiquitin-protein ligase complex that mediates ubiquitination and subsequent proteasomal degradation of target proteins. The chain is Ran-binding protein 9 (ranbp9) from Danio rerio (Zebrafish).